A 65-amino-acid chain; its full sequence is Large ribosomal subunit protein bL35 (65 aa).

A disordered region spans residues 24–48; the sequence is RRKAGKSHLLEHKSSDKKRSMSKTT. The segment covering 31–42 has biased composition (basic and acidic residues); the sequence is HLLEHKSSDKKR.

It belongs to the bacterial ribosomal protein bL35 family.

This is Large ribosomal subunit protein bL35 from Nostoc punctiforme (strain ATCC 29133 / PCC 73102).